Reading from the N-terminus, the 127-residue chain is Small ribosomal subunit protein uS11 (127 aa).

It belongs to the universal ribosomal protein uS11 family. As to quaternary structure, part of the 30S ribosomal subunit. Interacts with proteins S7 and S18. Binds to IF-3.

Its function is as follows. Located on the platform of the 30S subunit, it bridges several disparate RNA helices of the 16S rRNA. Forms part of the Shine-Dalgarno cleft in the 70S ribosome. The chain is Small ribosomal subunit protein uS11 from Rickettsia prowazekii (strain Madrid E).